A 293-amino-acid chain; its full sequence is Aquaporin-6 (293 aa).

The Cytoplasmic segment spans residues Met-1–Lys-22. Residues Ala-23–Leu-43 form a helical membrane-spanning segment. Residues Pro-44–Ser-51 lie on the Extracellular side of the membrane. The chain crosses the membrane as a helical span at residues Val-52–Ser-70. The Cytoplasmic segment spans residues Trp-71–Gly-75. An intramembrane region (discontinuously helical) is located at residues Ala-76 to Ala-85. The NPA 1 signature appears at Asn-79–Ala-81. The Cytoplasmic segment spans residues Tyr-86 to Arg-96. Residues Ala-97–Val-118 traverse the membrane as a helical segment. At Thr-119–Thr-138 the chain is on the extracellular side. N-linked (GlcNAc...) asparagine glycosylation occurs at Asn-134. A helical transmembrane segment spans residues Gly-139 to Ser-159. Residues Met-160–Thr-165 are Cytoplasmic-facing. Residues Leu-166–Ile-185 traverse the membrane as a helical segment. Residues Tyr-186–Gly-189 lie on the Extracellular side of the membrane. The discontinuously helical intramembrane region spans Cys-190–Val-202. Residues Asn-193–Ala-195 carry the NPA 2 motif. Residues Ile-203 to His-210 lie on the Extracellular side of the membrane. The helical transmembrane segment at Trp-211 to Ile-231 threads the bilayer. Residues Leu-232 to Cys-293 are Cytoplasmic-facing.

This sequence belongs to the MIP/aquaporin (TC 1.A.8) family. As to quaternary structure, homotetramer; each monomer provides an independent solute pore.

It localises to the cytoplasmic vesicle membrane. The catalysed reaction is nitrate(in) = nitrate(out). It carries out the reaction iodide(out) = iodide(in). It catalyses the reaction bromide(in) = bromide(out). The enzyme catalyses chloride(in) = chloride(out). The catalysed reaction is Na(+)(in) = Na(+)(out). It carries out the reaction H2O(in) = H2O(out). It catalyses the reaction CO2(out) = CO2(in). The enzyme catalyses NH4(+)(in) = NH4(+)(out). Aquaporins form homotetrameric transmembrane channels, with each monomer independently mediating water transport across the plasma membrane along its osmotic gradient. Unlike classical aquaporins, AQP6 is an intracellular channel with selective anion permeability, particularly for nitrate, and exhibits very low water permeability. It may also facilitate the transport of gases, such as CO2 and NH4(+), as demonstrated in vitro. The protein is Aquaporin-6 of Mus musculus (Mouse).